Consider the following 919-residue polypeptide: TRPM8 channel-associated factor 2 (919 aa).

In terms of domain architecture, Peptidase M60 spans 542-841 (DCWVSTGLYL…TYLQLQEAFG (300 aa)).

Belongs to the TCAF family. Isoform 2 interacts with TRPM8 (via N-terminus and C-terminus domains); the interaction inhibits TRPM8 channel activity. Interacts with TRPV6. Isoform 2 is expressed in the prostate and in cancerous prostate samples.

The protein resides in the cell membrane. In terms of biological role, negatively regulates the plasma membrane cation channel TRPM8 activity. Involved in the recruitment of TRPM8 to the cell surface. Promotes prostate cancer cell migration stimulation in a TRPM8-dependent manner. In Homo sapiens (Human), this protein is TRPM8 channel-associated factor 2.